Here is a 370-residue protein sequence, read N- to C-terminus: Holliday junction branch migration complex subunit RuvB (370 aa).

A large ATPase domain (RuvB-L) region spans residues 1 to 182; sequence MDERMMTSAK…FGVIHRLEYY (182 aa). ATP contacts are provided by residues leucine 21, arginine 22, glycine 63, lysine 66, threonine 67, threonine 68, 129 to 131, arginine 172, tyrosine 182, and arginine 219; that span reads EDF. Threonine 67 provides a ligand contact to Mg(2+). The segment at 183–253 is small ATPAse domain (RuvB-S); it reads RPDELEFIIL…VAREALRRLE (71 aa). Positions 256–370 are head domain (RuvB-H); sequence PRGLDTTDQR…AEQAALSFDE (115 aa). DNA-binding residues include arginine 311 and arginine 316.

The protein belongs to the RuvB family. As to quaternary structure, homohexamer. Forms an RuvA(8)-RuvB(12)-Holliday junction (HJ) complex. HJ DNA is sandwiched between 2 RuvA tetramers; dsDNA enters through RuvA and exits via RuvB. An RuvB hexamer assembles on each DNA strand where it exits the tetramer. Each RuvB hexamer is contacted by two RuvA subunits (via domain III) on 2 adjacent RuvB subunits; this complex drives branch migration. In the full resolvosome a probable DNA-RuvA(4)-RuvB(12)-RuvC(2) complex forms which resolves the HJ.

The protein resides in the cytoplasm. It catalyses the reaction ATP + H2O = ADP + phosphate + H(+). The RuvA-RuvB-RuvC complex processes Holliday junction (HJ) DNA during genetic recombination and DNA repair, while the RuvA-RuvB complex plays an important role in the rescue of blocked DNA replication forks via replication fork reversal (RFR). RuvA specifically binds to HJ cruciform DNA, conferring on it an open structure. The RuvB hexamer acts as an ATP-dependent pump, pulling dsDNA into and through the RuvAB complex. RuvB forms 2 homohexamers on either side of HJ DNA bound by 1 or 2 RuvA tetramers; 4 subunits per hexamer contact DNA at a time. Coordinated motions by a converter formed by DNA-disengaged RuvB subunits stimulates ATP hydrolysis and nucleotide exchange. Immobilization of the converter enables RuvB to convert the ATP-contained energy into a lever motion, pulling 2 nucleotides of DNA out of the RuvA tetramer per ATP hydrolyzed, thus driving DNA branch migration. The RuvB motors rotate together with the DNA substrate, which together with the progressing nucleotide cycle form the mechanistic basis for DNA recombination by continuous HJ branch migration. Branch migration allows RuvC to scan DNA until it finds its consensus sequence, where it cleaves and resolves cruciform DNA. In Heliobacterium modesticaldum (strain ATCC 51547 / Ice1), this protein is Holliday junction branch migration complex subunit RuvB.